The chain runs to 267 residues: 4-hydroxy-2-oxo-heptane-1,7-dioate aldolase (267 aa).

The active-site Proton acceptor is H45. A substrate-binding site is contributed by Q147. An a divalent metal cation-binding site is contributed by E149. Substrate is bound by residues A174 and D175. D175 serves as a coordination point for a divalent metal cation.

It belongs to the HpcH/HpaI aldolase family. As to quaternary structure, homohexamer; trimer of dimers. Requires a divalent metal cation as cofactor.

The catalysed reaction is 4-hydroxy-2-oxoheptanedioate = succinate semialdehyde + pyruvate. Its pathway is aromatic compound metabolism; 4-hydroxyphenylacetate degradation; pyruvate and succinate semialdehyde from 4-hydroxyphenylacetate: step 7/7. Functionally, catalyzes the reversible retro-aldol cleavage of 4-hydroxy-2-ketoheptane-1,7-dioate (HKHD) to pyruvate and succinic semialdehyde. The chain is 4-hydroxy-2-oxo-heptane-1,7-dioate aldolase from Shigella flexneri.